Reading from the N-terminus, the 170-residue chain is MGKRYFCDYCDRSFQDNLHNRKKHLNGLQHLKAKKLWYDMFRDAAAILLDEQNKRPCRKFLLTGQCDFGSNCRFSHMSERDLQELSVQVEEERRAREWPLDVAELPEVCLEDWLEKRAKRLSSAPSSRAEPVRATVFQYPVGWPPVQELPPSLRAPPPGGWPLQPSVQWG.

The C3H1-type zinc-finger motif lies at 51 to 79 (EQNKRPCRKFLLTGQCDFGSNCRFSHMSE). Residues 150 to 170 (PPSLRAPPPGGWPLQPSVQWG) are disordered.

As to quaternary structure, component of the U11/U12 snRNPs that are part of the U12-type spliceosome.

It is found in the nucleus. The protein is Zinc finger matrin-type protein 5 (ZMAT5) of Bos taurus (Bovine).